The chain runs to 481 residues: Protein JASON (481 aa).

The segment at 226–250 (ECDLDQSNSSNSSENGSSRKPEMGG) is disordered. Over residues 232-241 (SNSSNSSENG) the composition is skewed to low complexity.

In terms of biological role, required for normal spindle orientation at male meiosis II and normal formation of tetrad of microspores. Acts as a positive regulator of PS1 in male sporogenesis. Not involved in female meiosis. This chain is Protein JASON, found in Arabidopsis thaliana (Mouse-ear cress).